The chain runs to 139 residues: Ribulose bisphosphate carboxylase small subunit (139 aa).

It belongs to the RuBisCO small chain family. As to quaternary structure, heterohexadecamer of 8 large and 8 small subunits.

The protein resides in the plastid. It is found in the chloroplast. RuBisCO catalyzes two reactions: the carboxylation of D-ribulose 1,5-bisphosphate, the primary event in carbon dioxide fixation, as well as the oxidative fragmentation of the pentose substrate in the photorespiration process. Both reactions occur simultaneously and in competition at the same active site. Although the small subunit is not catalytic it is essential for maximal activity. The protein is Ribulose bisphosphate carboxylase small subunit of Olisthodiscus luteus (Marine phytoflagellate).